We begin with the raw amino-acid sequence, 461 residues long: Major capsid protein (461 aa).

Positions 1-18 (MSTPTISADTTAQNATST) are enriched in polar residues. Positions 1–22 (MSTPTISADTTAQNATSTEVRE) are disordered.

It is found in the virion. In terms of biological role, major protein of the capsid. In Spodoptera frugiperda ascovirus 1a (SfAV-1a), this protein is Major capsid protein (MCP).